A 151-amino-acid chain; its full sequence is Deoxyuridine 5'-triphosphate nucleotidohydrolase (151 aa).

Residues 71 to 73, Asn-84, and 88 to 90 each bind substrate; these read RSG and TID.

This sequence belongs to the dUTPase family. The cofactor is Mg(2+).

The catalysed reaction is dUTP + H2O = dUMP + diphosphate + H(+). It participates in pyrimidine metabolism; dUMP biosynthesis; dUMP from dCTP (dUTP route): step 2/2. In terms of biological role, this enzyme is involved in nucleotide metabolism: it produces dUMP, the immediate precursor of thymidine nucleotides and it decreases the intracellular concentration of dUTP so that uracil cannot be incorporated into DNA. This is Deoxyuridine 5'-triphosphate nucleotidohydrolase from Gluconobacter oxydans (strain 621H) (Gluconobacter suboxydans).